A 2209-amino-acid polypeptide reads, in one-letter code: Genome polyprotein (2209 aa).

A lipid anchor (N-myristoyl glycine; by host) is attached at Gly2. Topologically, residues 2–1520 (GAQVSSQKVG…NINRAMTILQ (1519 aa)) are cytoplasmic. Residues 580-600 (GLGQMLESMIDNTVRETVGAA) are amphipathic alpha-helix. Catalysis depends on for protease 2A activity residues His901 and Asp919. Residues Cys936 and Cys938 each coordinate Zn(2+). Residue Cys990 is the For protease 2A activity of the active site. The Zn(2+) site is built by Cys996 and His998. The interval 1128 to 1200 (GDSWLKKFTE…HQSCPSQEHQ (73 aa)) is membrane-binding. The interval 1128-1266 (GDSWLKKFTE…SPGTGKSVAT (139 aa)) is oligomerization. Residues 1149 to 1153 (SNKIS) form an RNA-binding region. One can recognise an SF3 helicase domain in the interval 1232-1388 (EHTINNYIQF…NEYSRDGKLN (157 aa)). 1256–1263 (GSPGTGKS) contacts ATP. Zn(2+)-binding residues include Cys1396, Cys1399, Cys1408, and Cys1413. The C4-type zinc finger occupies 1396–1413 (CKNCHQPANFKRCCPLVC). An RNA-binding region spans residues 1440–1447 (ERNRRSNI). The interval 1451 to 1456 (MEALFQ) is oligomerization. The stretch at 1521-1536 (AVTTFAAVAGVVYVMY) is an intramembrane region. The Cytoplasmic segment spans residues 1537–2209 (KLFAGHQGAY…TLYRRWLDSF (673 aa)). The residue at position 1546 (Tyr1546) is an O-(5'-phospho-RNA)-tyrosine. One can recognise a Peptidase C3 domain in the interval 1566 to 1744 (GPGFDYAVAM…FAAALKRSYF (179 aa)). Active-site for protease 3C activity residues include His1605, Glu1636, and Cys1712. The 116-residue stretch at 1975 to 2090 (EKLFAFDYTG…SYPHEVDASL (116 aa)) folds into the RdRp catalytic domain. The Mg(2+) site is built by Asp1981 and Asp2076.

This sequence belongs to the picornaviruses polyprotein family. Interacts with capsid protein VP1 and capsid protein VP3 to form heterotrimeric protomers. As to quaternary structure, interacts with capsid protein VP0, and capsid protein VP3 to form heterotrimeric protomers. Interacts with human PVR. Five protomers subsequently associate to form pentamers which serve as building blocks for the capsid. Interacts with capsid protein VP2, capsid protein VP3 and capsid protein VP4 following cleavage of capsid protein VP0. In terms of assembly, interacts with capsid protein VP1 and capsid protein VP3 in the mature capsid. Interacts with capsid protein VP0 and capsid protein VP1 to form heterotrimeric protomers. Five protomers subsequently associate to form pentamers which serve as building blocks for the capsid. Interacts with capsid protein VP4 in the mature capsid. Interacts with protein 2C; this interaction may be important for virion morphogenesis. As to quaternary structure, interacts with capsid protein VP1 and capsid protein VP3. In terms of assembly, homodimer. Homohexamer; forms a hexameric ring structure with 6-fold symmetry characteristic of AAA+ ATPases. Interacts (via N-terminus) with host RTN3 (via reticulon domain); this interaction is important for viral replication. Interacts with capsid protein VP3; this interaction may be important for virion morphogenesis. As to quaternary structure, interacts with protein 3CD. In terms of assembly, homodimer. Interacts with host GBF1. Interacts (via GOLD domain) with host ACBD3 (via GOLD domain); this interaction allows the formation of a viral protein 3A/ACBD3 heterotetramer with a 2:2 stoichiometry, which will stimulate the recruitment of host PI4KB in order to synthesize PI4P at the viral RNA replication sites. Interacts with RNA-directed RNA polymerase. As to quaternary structure, interacts with protein 3AB and with RNA-directed RNA polymerase. In terms of assembly, interacts with Viral protein genome-linked and with protein 3CD. Requires Mg(2+) as cofactor. In terms of processing, specific enzymatic cleavages in vivo by the viral proteases yield processing intermediates and the mature proteins. Post-translationally, myristoylation is required for the formation of pentamers during virus assembly. Further assembly of 12 pentamers and a molecule of genomic RNA generates the provirion. During virion maturation, immature virions are rendered infectious following cleavage of VP0 into VP4 and VP2. This maturation seems to be an autocatalytic event triggered by the presence of RNA in the capsid and it is followed by a conformational change infectious virion. In terms of processing, myristoylation is required during RNA encapsidation and formation of the mature virus particle. Post-translationally, VPg is uridylylated by the polymerase into VPg-pUpU. This acts as a nucleotide-peptide primer for the genomic RNA replication.

Its subcellular location is the virion. It localises to the host cytoplasm. The protein resides in the host cytoplasmic vesicle membrane. It is found in the host nucleus. The catalysed reaction is a ribonucleoside 5'-triphosphate + H2O = a ribonucleoside 5'-diphosphate + phosphate + H(+). It carries out the reaction Selective cleavage of Tyr-|-Gly bond in the picornavirus polyprotein.. It catalyses the reaction RNA(n) + a ribonucleoside 5'-triphosphate = RNA(n+1) + diphosphate. The enzyme catalyses Selective cleavage of Gln-|-Gly bond in the poliovirus polyprotein. In other picornavirus reactions Glu may be substituted for Gln, and Ser or Thr for Gly.. Replication or transcription is subject to high level of random mutations by the nucleotide analog ribavirin. Functionally, forms an icosahedral capsid of pseudo T=3 symmetry with capsid proteins VP2 and VP3. The capsid is 300 Angstroms in diameter, composed of 60 copies of each capsid protein and enclosing the viral positive strand RNA genome. Capsid protein VP1 mainly forms the vertices of the capsid. Capsid protein VP1 interacts with host cell receptor PVR to provide virion attachment to target host cells. This attachment induces virion internalization predominantly through clathrin- and caveolin-independent endocytosis in Hela cells and through caveolin-mediated endocytosis in brain microvascular endothelial cells. Tyrosine kinases are probably involved in the entry process. Virus binding to PVR induces increased junctional permeability and rearrangement of junctional proteins. Modulation of endothelial tight junctions, as well as cytolytic infection of endothelial cells themselves, may result in loss of endothelial integrity which may help the virus to reach the CNS. After binding to its receptor, the capsid undergoes conformational changes. Capsid protein VP1 N-terminus (that contains an amphipathic alpha-helix) and capsid protein VP4 are externalized. Together, they shape a pore in the host membrane through which viral genome is translocated to host cell cytoplasm. In terms of biological role, forms an icosahedral capsid of pseudo T=3 symmetry with capsid proteins VP2 and VP3. The capsid is 300 Angstroms in diameter, composed of 60 copies of each capsid protein and enclosing the viral positive strand RNA genome. Lies on the inner surface of the capsid shell. After binding to the host receptor, the capsid undergoes conformational changes. Capsid protein VP4 is released, Capsid protein VP1 N-terminus is externalized, and together, they shape a pore in the host membrane through which the viral genome is translocated into the host cell cytoplasm. Its function is as follows. Component of immature procapsids, which is cleaved into capsid proteins VP4 and VP2 after maturation. Allows the capsid to remain inactive before the maturation step. Functionally, cysteine protease that cleaves viral polyprotein and specific host proteins. It is responsible for the autocatalytic cleavage between the P1 and P2 regions, which is the first cleavage occurring in the polyprotein. Also cleaves the host translation initiation factor EIF4G1, in order to shut down the capped cellular mRNA translation. Inhibits the host nucleus-cytoplasm protein and RNA trafficking by cleaving host members of the nuclear pores including NUP98, NUP62 and NUP153. Counteracts stress granule formation probably by antagonizing its assembly or promoting its dissassembly. Cleaves and inhibits host IFIH1/MDA5, thereby inhibiting the type-I IFN production and the establishment of the antiviral state. Cleaves and inhibits host MAVS, thereby inhibiting the type-I IFN production and the establishment of the antiviral state. In terms of biological role, plays an essential role in the virus replication cycle by acting as a viroporin. Creates a pore in the host endoplasmic reticulum and as a consequence releases Ca2+ in the cytoplasm of infected cell. In turn, high levels of cytoplasmic calcium may trigger membrane trafficking and transport of viral ER-associated proteins to viroplasms, sites of viral genome replication. Induces and associates with structural rearrangements of intracellular membranes. Displays RNA-binding, nucleotide binding and NTPase activities. May play a role in virion morphogenesis and viral RNA encapsidation by interacting with the capsid protein VP3. Its function is as follows. Localizes the viral replication complex to the surface of membranous vesicles. Together with protein 3CD binds the Cis-Active RNA Element (CRE) which is involved in RNA synthesis initiation. Acts as a cofactor to stimulate the activity of 3D polymerase, maybe through a nucleid acid chaperone activity. Functionally, localizes the viral replication complex to the surface of membranous vesicles. It inhibits host cell endoplasmic reticulum-to-Golgi apparatus transport and causes the disassembly of the Golgi complex, possibly through GBF1 interaction. This would result in depletion of MHC, trail receptors and IFN receptors at the host cell surface. Plays an essential role in viral RNA replication by recruiting ACBD3 and PI4KB at the viral replication sites, thereby allowing the formation of the rearranged membranous structures where viral replication takes place. In terms of biological role, acts as a primer for viral RNA replication and remains covalently bound to viral genomic RNA. VPg is uridylylated prior to priming replication into VPg-pUpU. The oriI viral genomic sequence may act as a template for this. The VPg-pUpU is then used as primer on the genomic RNA poly(A) by the RNA-dependent RNA polymerase to replicate the viral genome. During genome replication, the VPg-RNA linkage is removed by the host TDP2, thereby accelerating replication. During the late stage of the replication cycle, host TDP2 is excluded from sites of viral RNA synthesis and encapsidation, allowing for the generation of progeny virions. Involved in the viral replication complex and viral polypeptide maturation. It exhibits protease activity with a specificity and catalytic efficiency that is different from protease 3C. Protein 3CD lacks polymerase activity. Protein 3CD binds to the 5'UTR of the viral genome. Its function is as follows. Major viral protease that mediates proteolytic processing of the polyprotein. Cleaves host EIF5B, contributing to host translation shutoff. Also cleaves host PABPC1, contributing to host translation shutoff. Cleaves host RIGI and thus contributes to the inhibition of type I interferon production. Cleaves host NLRP1, triggers host N-glycine-mediated degradation of the autoinhibitory NLRP1 N-terminal fragment. Inhibits the integrated stress response (ISR) in the infected cell by cleaving host G3BP1. Stress granule formation is thus inhibited, which allows protein synthesis and viral replication. Functionally, replicates the viral genomic RNA on the surface of intracellular membranes. May form linear arrays of subunits that propagate along a strong head-to-tail interaction called interface-I. Covalently attaches UMP to a tyrosine of VPg, which is used to prime RNA synthesis. The positive stranded RNA genome is first replicated at virus induced membranous vesicles, creating a dsRNA genomic replication form. This dsRNA is then used as template to synthesize positive stranded RNA genomes. ss(+)RNA genomes are either translated, replicated or encapsidated. This chain is Genome polyprotein, found in Homo sapiens (Human).